We begin with the raw amino-acid sequence, 762 residues long: Pyrophosphate-energized vacuolar membrane proton pump (762 aa).

The Intravacuolar segment spans residues 1–6; that stretch reads MAILGE. The chain crosses the membrane as a helical span at residues 7 to 33; it reads LGTEILIPVCGVIGIVFAVAQWFIVSK. Residues 34–81 lie on the Cytoplasmic side of the membrane; it reads VKVTPGAASAAAGAKNGYGDYLIEEEEGLNDHNVVVKCAEIQTAISEG. Residues 82-111 traverse the membrane as a helical segment; it reads ATSFLFTMYQYVGMFMVVFAAIIFLFLGSI. The Intravacuolar segment spans residues 112–131; the sequence is EGFSTKGQPCTYSKGTCKPA. Cys121 and Cys128 are disulfide-bonded. The helical transmembrane segment at 132–159 threads the bilayer; the sequence is LYTALFSTASFLLGAITSLVSGFLGMKI. Residues 160–182 are Cytoplasmic-facing; it reads ATYANARTTLEARKGVGKAFITA. A helical membrane pass occupies residues 183-212; the sequence is FRSGAVMGFLLSSSGLVVLYITINVFKMYY. Residues 213–215 lie on the Intravacuolar side of the membrane; that stretch reads GDD. The chain crosses the membrane as a helical span at residues 216–244; sequence WEGLFESITGYGLGGSSMALFGRVGGGIY. The Cytoplasmic segment spans residues 245-282; sequence TKAADVGADLVGKVERNIPEDDPRNPAVIADNVGDNVG. Lys246 provides a ligand contact to substrate. Mg(2+) contacts are provided by Asp249, Asp253, and Asp279. Residues 283–308 form a helical membrane-spanning segment; the sequence is DIAGMGSDLFGSYAESSCAALVVASI. Residues 309–316 lie on the Intravacuolar side of the membrane; sequence SSFGINHD. A helical transmembrane segment spans residues 317 to 342; the sequence is FTAMCYPLLVSSVGIIVCLLTTLFAT. At 343-350 the chain is on the cytoplasmic side; that stretch reads DFFEIKAA. Residues 351-378 traverse the membrane as a helical segment; sequence NEIEPALKKQLIISTALMTVGVAVISWL. The Intravacuolar portion of the chain corresponds to 379-397; that stretch reads ALPAKFTIFNFGAQKEVSN. A helical transmembrane segment spans residues 398–421; sequence WGLFFCVAVGLWAGLIIGFVTEYY. The Cytoplasmic portion of the chain corresponds to 422–443; the sequence is TSNAYSPVQDVADSCRTGAATN. The helical transmembrane segment at 444–468 threads the bilayer; that stretch reads VIFGLALGYKSVIIPIFAIAVSIYV. Residues 469–474 lie on the Intravacuolar side of the membrane; the sequence is SFSIAA. Residues 475–501 traverse the membrane as a helical segment; that stretch reads MYGIAMAALGMLSTMATGLAIDAYGPI. Residues 502–530 lie on the Cytoplasmic side of the membrane; it reads SDNAGGIAEMAGMSHRIRERTDALDAAGN. Mg(2+) is bound by residues Asp503 and Asn530. A helical membrane pass occupies residues 531 to 559; it reads TTAAIGKGFAIGSAALVSLALFGAFVSRA. Residues 560 to 569 lie on the Intravacuolar side of the membrane; it reads GVKVVDVLSP. The helical transmembrane segment at 570-598 threads the bilayer; it reads KVFIGLIVGAMLPYWFSAMTMKSVGSAAL. The Cytoplasmic segment spans residues 599-627; that stretch reads KMVEEVRRQFNTIPGLMEGTAKPDYATCV. The helical transmembrane segment at 628–656 threads the bilayer; the sequence is KISTDASIKEMIPPGALVMLTPLIVGTLF. Position 657 (Gly657) is a topological domain, intravacuolar. The helical transmembrane segment at 658–685 threads the bilayer; the sequence is VETLSGVLAGALVSGVQIAISASNTGGA. The Cytoplasmic portion of the chain corresponds to 686 to 728; the sequence is WDNAKKYIEAGNSEHARSLGPKGSDCHKAAVIGDTIGDPLKDT. Asp687 and Asp723 together coordinate Mg(2+). Lys726 contacts substrate. The helical transmembrane segment at 729–754 threads the bilayer; sequence SGPSLNILIKLMAVESLVFAPFFATY. At 755–762 the chain is on the intravacuolar side; the sequence is GGLLFKYI.

Belongs to the H(+)-translocating pyrophosphatase (TC 3.A.10) family. K(+)-stimulated subfamily. In terms of assembly, monomer.

The protein localises to the vacuole membrane. It carries out the reaction diphosphate + H2O + H(+)(in) = 2 phosphate + 2 H(+)(out). Contributes to the transtonoplast (from cytosol to vacuole lumen) H(+)-electrochemical potential difference. It establishes a proton gradient of similar and often greater magnitude than the H(+)-ATPase on the same membrane. The polypeptide is Pyrophosphate-energized vacuolar membrane proton pump (Hordeum vulgare (Barley)).